The sequence spans 176 residues: Large ribosomal subunit protein uL10 (176 aa).

This sequence belongs to the universal ribosomal protein uL10 family. In terms of assembly, part of the ribosomal stalk of the 50S ribosomal subunit. The N-terminus interacts with L11 and the large rRNA to form the base of the stalk. The C-terminus forms an elongated spine to which L12 dimers bind in a sequential fashion forming a multimeric L10(L12)X complex.

In terms of biological role, forms part of the ribosomal stalk, playing a central role in the interaction of the ribosome with GTP-bound translation factors. In Saccharophagus degradans (strain 2-40 / ATCC 43961 / DSM 17024), this protein is Large ribosomal subunit protein uL10.